A 421-amino-acid chain; its full sequence is UV-B-induced protein At3g17800, chloroplastic (421 aa).

Disordered stretches follow at residues 1 to 40 and 74 to 95; these read MDALTSSLVRSPIVPSRTSDNGSGSMFLTASGPGFTRSGS and VRASSASNDASSGSSPKPIAPL. The N-terminal 75 residues, 1 to 75, are a transit peptide targeting the chloroplast; sequence MDALTSSLVR…AKTRRSFVVR (75 aa). Over residues 16 to 28 the composition is skewed to polar residues; it reads SRTSDNGSGSMFL. The span at 74-88 shows a compositional bias: low complexity; that stretch reads VRASSASNDASSGSS.

Its subcellular location is the plastid. The protein resides in the chloroplast. The sequence is that of UV-B-induced protein At3g17800, chloroplastic from Arabidopsis thaliana (Mouse-ear cress).